A 243-amino-acid polypeptide reads, in one-letter code: Derlin-1.2 (243 aa).

Residues 1–20 (MSSPAEYYKSLPPISKAYGT) lie on the Cytoplasmic side of the membrane. A helical transmembrane segment spans residues 21-41 (LCFFTTVLVRLHILNPLFLYL). Topologically, residues 42–54 (YYPRVFKKFEVWR) are lumenal. The helical transmembrane segment at 55–75 (IFTSFFFLGPFSINFGIRLLM) threads the bilayer. Topologically, residues 76-94 (IARYGVMLEKGAFDKRTAD) are cytoplasmic. Residues 95–115 (FLWMMIFGAISLLVLSVIPQL) form a helical membrane-spanning segment. Residues 116 to 155 (NTYVLGLPMVSMLVYVWSRENPNAQINIYGILQLKAFYLP) lie on the Lumenal side of the membrane. Residues 156–176 (WVMLLLDVIFGSPLMPGLLGI) form a helical membrane-spanning segment. At 177-243 (MVGHLYYYFA…FRGRSYRLNQ (67 aa)) the chain is on the cytoplasmic side.

This sequence belongs to the derlin family. As to expression, expressed in roots and endosperm.

It localises to the endoplasmic reticulum membrane. Functionally, may be involved in the degradation process of specific misfolded endoplasmic reticulum (ER) luminal proteins. This chain is Derlin-1.2 (DER1.2), found in Zea mays (Maize).